Here is a 328-residue protein sequence, read N- to C-terminus: Phosphate acyltransferase (328 aa).

Belongs to the PlsX family. As to quaternary structure, homodimer. Probably interacts with PlsY.

The protein localises to the cytoplasm. The catalysed reaction is a fatty acyl-[ACP] + phosphate = an acyl phosphate + holo-[ACP]. The protein operates within lipid metabolism; phospholipid metabolism. Catalyzes the reversible formation of acyl-phosphate (acyl-PO(4)) from acyl-[acyl-carrier-protein] (acyl-ACP). This enzyme utilizes acyl-ACP as fatty acyl donor, but not acyl-CoA. This chain is Phosphate acyltransferase, found in Campylobacter jejuni subsp. jejuni serotype O:2 (strain ATCC 700819 / NCTC 11168).